The following is a 708-amino-acid chain: Glycogen [starch] synthase isoform 1 (708 aa).

Arg20 contacts UDP. Ser159 is modified (phosphoserine). Residues His193 and Arg199 each coordinate UDP-alpha-D-glucose. The alpha-D-glucose 6-phosphate site is built by His280, Glu281, Gln283, His286, and Lys290. Arg320 contributes to the UDP binding site. Position 320 (Arg320) interacts with UDP-alpha-D-glucose. At Ser363 the chain carries Phosphoserine. Residue His500 participates in alpha-D-glucose 6-phosphate binding. The UDP-alpha-D-glucose site is built by Glu509, Trp511, and Gly512. Thr514 provides a ligand contact to UDP. At Ser560 the chain carries Phosphoserine. The alpha-D-glucose 6-phosphate site is built by Arg583 and Arg587. 2 positions are modified to phosphoserine: Ser651 and Ser655. Phosphoserine; by PKA is present on residues Ser660 and Ser662. Residues 687–708 (STNGAIDNDDDDNDTSAYYEDN) are disordered. A compositionally biased stretch (acidic residues) spans 693–708 (DNDDDDNDTSAYYEDN).

It belongs to the glycosyltransferase 3 family.

It catalyses the reaction [(1-&gt;4)-alpha-D-glucosyl](n) + UDP-alpha-D-glucose = [(1-&gt;4)-alpha-D-glucosyl](n+1) + UDP + H(+). Its pathway is glycan biosynthesis; glycogen biosynthesis. Allosteric activation by glucose-6-phosphate, and phosphorylation by a cAMP-dependent kinase. Its function is as follows. Glycogen synthase participates in the glycogen biosynthetic process along with glycogenin and glycogen branching enzyme. Extends the primer composed of a few glucose units formed by glycogenin by adding new glucose units to it. In this context, glycogen synthase transfers the glycosyl residue from UDP-Glc to the non-reducing end of alpha-1,4-glucan. The chain is Glycogen [starch] synthase isoform 1 (GSY1) from Saccharomyces cerevisiae (strain ATCC 204508 / S288c) (Baker's yeast).